A 107-amino-acid chain; its full sequence is Prostate collagen triple helix protein (107 aa).

The tract at residues Pro-47–Pro-107 is disordered. The span at Val-81 to Ser-100 shows a compositional bias: low complexity.

Expressed in prostate and testis. Weakly or not expressed in other tissues. Overexpressed in prostate cancers.

Its subcellular location is the cytoplasm. Its function is as follows. May be involved in growth and survival of prostate cancer cells through the TAF-Ibeta pathway. In Homo sapiens (Human), this protein is Prostate collagen triple helix protein (PCOTH).